A 212-amino-acid chain; its full sequence is Small ribosomal subunit protein uS4c (212 aa).

One can recognise an S4 RNA-binding domain in the interval 89–152 (MRLDNIIFRL…RSRALVDKNL (64 aa)).

The protein belongs to the universal ribosomal protein uS4 family. As to quaternary structure, part of the 30S ribosomal subunit. Contacts protein S5. The interaction surface between S4 and S5 is involved in control of translational fidelity.

The protein resides in the plastid. The protein localises to the chloroplast. Functionally, one of the primary rRNA binding proteins, it binds directly to 16S rRNA where it nucleates assembly of the body of the 30S subunit. Its function is as follows. With S5 and S12 plays an important role in translational accuracy. In Staurastrum punctulatum (Green alga), this protein is Small ribosomal subunit protein uS4c (rps4).